The primary structure comprises 260 residues: 3-alpha-(or 20-beta)-hydroxysteroid dehydrogenase (260 aa).

11 residues coordinate NAD(+): arginine 17, methionine 19, aspartate 38, aspartate 61, valine 62, asparagine 88, tyrosine 153, lysine 157, valine 186, threonine 188, and threonine 191. Tyrosine 153 (proton acceptor) is an active-site residue.

Belongs to the short-chain dehydrogenases/reductases (SDR) family. Homotetramer.

The catalysed reaction is androstan-3alpha,17beta-diol + NAD(+) = 17beta-hydroxyandrostanone + NADH + H(+). The protein operates within lipid metabolism; steroid degradation. In terms of biological role, probably involved in steroid metabolism. The protein is 3-alpha-(or 20-beta)-hydroxysteroid dehydrogenase (fabG3) of Mycobacterium tuberculosis (strain CDC 1551 / Oshkosh).